A 438-amino-acid polypeptide reads, in one-letter code: Exodeoxyribonuclease 7 large subunit (438 aa).

The segment at 406–438 is disordered; that stretch reads ATSTGPTDDIPSSAARLPASPAPDARPASGPES.

Belongs to the XseA family. As to quaternary structure, heterooligomer composed of large and small subunits.

Its subcellular location is the cytoplasm. It carries out the reaction Exonucleolytic cleavage in either 5'- to 3'- or 3'- to 5'-direction to yield nucleoside 5'-phosphates.. Its function is as follows. Bidirectionally degrades single-stranded DNA into large acid-insoluble oligonucleotides, which are then degraded further into small acid-soluble oligonucleotides. The polypeptide is Exodeoxyribonuclease 7 large subunit (Clavibacter sepedonicus (Clavibacter michiganensis subsp. sepedonicus)).